The primary structure comprises 356 residues: UDP-N-acetylglucosamine--N-acetylmuramyl-(pentapeptide) pyrophosphoryl-undecaprenol N-acetylglucosamine transferase (356 aa).

UDP-N-acetyl-alpha-D-glucosamine-binding positions include 15–17 (TGG), Asn127, Arg163, Ser191, Ile244, 263–268 (ALTVSE), and Gln288.

Belongs to the glycosyltransferase 28 family. MurG subfamily.

It is found in the cell inner membrane. The catalysed reaction is di-trans,octa-cis-undecaprenyl diphospho-N-acetyl-alpha-D-muramoyl-L-alanyl-D-glutamyl-meso-2,6-diaminopimeloyl-D-alanyl-D-alanine + UDP-N-acetyl-alpha-D-glucosamine = di-trans,octa-cis-undecaprenyl diphospho-[N-acetyl-alpha-D-glucosaminyl-(1-&gt;4)]-N-acetyl-alpha-D-muramoyl-L-alanyl-D-glutamyl-meso-2,6-diaminopimeloyl-D-alanyl-D-alanine + UDP + H(+). It participates in cell wall biogenesis; peptidoglycan biosynthesis. Its function is as follows. Cell wall formation. Catalyzes the transfer of a GlcNAc subunit on undecaprenyl-pyrophosphoryl-MurNAc-pentapeptide (lipid intermediate I) to form undecaprenyl-pyrophosphoryl-MurNAc-(pentapeptide)GlcNAc (lipid intermediate II). This Yersinia pseudotuberculosis serotype O:1b (strain IP 31758) protein is UDP-N-acetylglucosamine--N-acetylmuramyl-(pentapeptide) pyrophosphoryl-undecaprenol N-acetylglucosamine transferase.